The chain runs to 212 residues: Methylthioribulose-1-phosphate dehydratase (212 aa).

Residues H103 and H105 each coordinate Zn(2+).

The protein belongs to the aldolase class II family. MtnB subfamily. Zn(2+) is required as a cofactor.

It catalyses the reaction 5-(methylsulfanyl)-D-ribulose 1-phosphate = 5-methylsulfanyl-2,3-dioxopentyl phosphate + H2O. It functions in the pathway amino-acid biosynthesis; L-methionine biosynthesis via salvage pathway; L-methionine from S-methyl-5-thio-alpha-D-ribose 1-phosphate: step 2/6. Its function is as follows. Catalyzes the dehydration of methylthioribulose-1-phosphate (MTRu-1-P) into 2,3-diketo-5-methylthiopentyl-1-phosphate (DK-MTP-1-P). The chain is Methylthioribulose-1-phosphate dehydratase from Sorangium cellulosum (strain So ce56) (Polyangium cellulosum (strain So ce56)).